A 105-amino-acid chain; its full sequence is Large ribosomal subunit protein uL24 (105 aa).

Belongs to the universal ribosomal protein uL24 family. Part of the 50S ribosomal subunit.

Functionally, one of two assembly initiator proteins, it binds directly to the 5'-end of the 23S rRNA, where it nucleates assembly of the 50S subunit. One of the proteins that surrounds the polypeptide exit tunnel on the outside of the subunit. This is Large ribosomal subunit protein uL24 from Wolbachia sp. subsp. Brugia malayi (strain TRS).